A 202-amino-acid polypeptide reads, in one-letter code: Orotate phosphoribosyltransferase (202 aa).

E113–S121 is a binding site for 5-phospho-alpha-D-ribose 1-diphosphate. Orotate contacts are provided by T117 and R145.

The protein belongs to the purine/pyrimidine phosphoribosyltransferase family. PyrE subfamily. As to quaternary structure, homodimer. It depends on Mg(2+) as a cofactor.

It catalyses the reaction orotidine 5'-phosphate + diphosphate = orotate + 5-phospho-alpha-D-ribose 1-diphosphate. It functions in the pathway pyrimidine metabolism; UMP biosynthesis via de novo pathway; UMP from orotate: step 1/2. In terms of biological role, catalyzes the transfer of a ribosyl phosphate group from 5-phosphoribose 1-diphosphate to orotate, leading to the formation of orotidine monophosphate (OMP). This chain is Orotate phosphoribosyltransferase, found in Nitratiruptor sp. (strain SB155-2).